We begin with the raw amino-acid sequence, 206 residues long: Regulator of rDNA transcription protein 14 (206 aa).

The disordered stretch occupies residues 178–206 (FVKDHRYPGLTPGLAPVGLSDEEDSSEED). Ser197, Ser202, and Ser203 each carry phosphoserine. A compositionally biased stretch (acidic residues) spans 197 to 206 (SDEEDSSEED).

Belongs to the RRT14 family.

The protein localises to the nucleus. It localises to the nucleolus. Functionally, involved in ribosome biogenesis, probably through modulation of rDNA transcription. The protein is Regulator of rDNA transcription protein 14 (RRT14) of Saccharomyces cerevisiae (strain ATCC 204508 / S288c) (Baker's yeast).